We begin with the raw amino-acid sequence, 173 residues long: Inorganic pyrophosphatase (173 aa).

The substrate site is built by K28, R42, and Y54. D64, D69, and D101 together coordinate Mg(2+). Y140 contributes to the substrate binding site.

The protein belongs to the PPase family. In terms of assembly, homohexamer. It depends on Mg(2+) as a cofactor.

It is found in the cytoplasm. The enzyme catalyses diphosphate + H2O = 2 phosphate + H(+). Catalyzes the hydrolysis of inorganic pyrophosphate (PPi) forming two phosphate ions. The sequence is that of Inorganic pyrophosphatase from Helicobacter pylori (strain J99 / ATCC 700824) (Campylobacter pylori J99).